Consider the following 1082-residue polypeptide: Neisserial autotransporter lipoprotein NalP (1082 aa).

Residues 1–27 (MRTTPTFPTKTFKPTAMALAVATTLSA) form the signal peptide. Residue C28 is the site of N-palmitoyl cysteine attachment. C28 is lipidated: S-diacylglycerol cysteine. One can recognise a Peptidase S8 domain in the interval 110 to 482 (NDAYKNLINL…WGLLDAGKAM (373 aa)). Catalysis depends on charge relay system residues D138, H210, and S426. The region spanning 808 to 1082 (DGLDHNGTGL…SGRVGVGYRF (275 aa)) is the Autotransporter domain.

The protein belongs to the peptidase S8 family. In terms of processing, probably auto-processes to yield a 68-70 kDa form and a C-terminal 30 kDa translocator domain; upon overexpression in situ and in E.coli full-length protein is seen as well as (probably) auto-processed forms of 68-70 kDa and 30 kDa in size, suggesting this may have protease activity.

It localises to the cell outer membrane. The protein localises to the cell surface. The protein resides in the secreted. Its subcellular location is the host cytoplasm. It is found in the host perinuclear region. Its activity is regulated as follows. Cleavage of host complement factor C3 is inhibited by PMSF. Its function is as follows. Major human immunogenic protein, detected in patients recovering from meningitidis. Autotransporter with a secreted protease domain involved in processing other autotransporter proteins including App, IgA, LbpB and NHBA. Probably autoprocesses to release the about 70 kDa passenger domain. Both cell surface protein (Neisserial autotransporter lipoprotein NalP) and the passenger domain cleave human (host) complement factor C3, generating a shorter alpha chain and a longer beta chain than normal. Uptake of a passenger domain fragment (residues 101-784) by human cells increases cell metabolic activity; the serine protease activity is required for this increase. Cleaves human (host) complement factor C3, generating a shorter alpha chain and a longer beta chain than normal. Does not act on mouse or rabbit C3. Cleavage causes C3b degradation by human CFI and CFH, and thus decreases deposition of C3b on the bacteria surface and probably facilitates complement escape. Functionally, plays a role in extracellular-DNA (eDNA) mediated biofilm formation. In some strains (including cc32 strain MC58) eDNA stimulates biofilm formation. When NalP is not expressed (and no longer processes NHBA or IgA) biofilm formation increases. This is Neisserial autotransporter lipoprotein NalP from Neisseria meningitidis serogroup B (strain ATCC BAA-335 / MC58).